We begin with the raw amino-acid sequence, 282 residues long: Small ribosomal subunit protein uS2 (282 aa).

The segment at 260–282 (KRRRSKVYKEEEREVVTNEDESR) is disordered. The segment covering 266-282 (VYKEEEREVVTNEDESR) has biased composition (basic and acidic residues).

It belongs to the universal ribosomal protein uS2 family.

This is Small ribosomal subunit protein uS2 from Wolbachia sp. subsp. Drosophila simulans (strain wRi).